Consider the following 456-residue polypeptide: Methylenetetrahydrofolate--tRNA-(uracil-5-)-methyltransferase TrmFO (456 aa).

11–16 (GAGLAG) lines the FAD pocket.

Belongs to the MnmG family. TrmFO subfamily. Requires FAD as cofactor.

Its subcellular location is the cytoplasm. The catalysed reaction is uridine(54) in tRNA + (6R)-5,10-methylene-5,6,7,8-tetrahydrofolate + NADH + H(+) = 5-methyluridine(54) in tRNA + (6S)-5,6,7,8-tetrahydrofolate + NAD(+). It carries out the reaction uridine(54) in tRNA + (6R)-5,10-methylene-5,6,7,8-tetrahydrofolate + NADPH + H(+) = 5-methyluridine(54) in tRNA + (6S)-5,6,7,8-tetrahydrofolate + NADP(+). Functionally, catalyzes the folate-dependent formation of 5-methyl-uridine at position 54 (M-5-U54) in all tRNAs. The chain is Methylenetetrahydrofolate--tRNA-(uracil-5-)-methyltransferase TrmFO from Synechococcus sp. (strain CC9605).